A 377-amino-acid chain; its full sequence is Diels-Alderase fsa2 (377 aa).

The protein belongs to the Diels-Alderase family.

The catalysed reaction is (5S)-3-[(2E,6R,8E,10E,12E)-2,6-dimethyltetradeca-2,8,10,12-tetraenoyl]-5-(hydroxymethyl)pyrrolidine-2,4-dione = trichosetin. It participates in mycotoxin biosynthesis. In terms of biological role, diels-Alderase; part of the gene cluster that mediates the biosynthesis of equisetin, a trans-fused decalin-containing tetramic acid with antimicrobial activity. The PKS module of eqxS together with the enoylreductase eqxC catalyze the formation of the polyketide unit which is then conjugated to L-serine by the condensation domain of the eqxS NRPS module. Activity of the Dieckmann cyclase domain (RED) results in release of the Dieckmann product intermediate. Diels-Alderase eqx3 is involved in endo-selective Diels-Alder cycloaddition to form the decalin ring, leading to the production of N-desmethylequisetin also called trichosetin. Subsequent N-methylation is carried out by eqxD to give equisetin. The sequence is that of Diels-Alderase fsa2 from Fusarium heterosporum.